The primary structure comprises 314 residues: Homoserine O-succinyltransferase (314 aa).

The Acyl-thioester intermediate role is filled by C142. Substrate contacts are provided by K163 and S192. The active-site Proton acceptor is the H235. The active site involves E237. R249 is a substrate binding site.

It belongs to the MetA family.

It is found in the cytoplasm. It catalyses the reaction L-homoserine + succinyl-CoA = O-succinyl-L-homoserine + CoA. The protein operates within amino-acid biosynthesis; L-methionine biosynthesis via de novo pathway; O-succinyl-L-homoserine from L-homoserine: step 1/1. Functionally, transfers a succinyl group from succinyl-CoA to L-homoserine, forming succinyl-L-homoserine. This Shewanella woodyi (strain ATCC 51908 / MS32) protein is Homoserine O-succinyltransferase.